Reading from the N-terminus, the 176-residue chain is MQDRRSSYDYEDLLACGRGEMFGPGNAQLPLPPMLMFNRITEINDNGGEYGKGLIRAELDVTSDLWFFGCHFKGDPVMPGCLGLDAMWQMVGFFLGWTGGEGRGRALGLGELKFTGQVLPDIRKVVYNIDVKRVMRSKLVLGIADGWLSADDTIIYRAKELKVGLFKQDAAVPAGG.

His71 is an active-site residue.

This sequence belongs to the thioester dehydratase family. FabA subfamily. Homodimer.

It localises to the cytoplasm. It carries out the reaction a (3R)-hydroxyacyl-[ACP] = a (2E)-enoyl-[ACP] + H2O. The enzyme catalyses (3R)-hydroxydecanoyl-[ACP] = (2E)-decenoyl-[ACP] + H2O. It catalyses the reaction (2E)-decenoyl-[ACP] = (3Z)-decenoyl-[ACP]. It functions in the pathway lipid metabolism; fatty acid biosynthesis. Its function is as follows. Necessary for the introduction of cis unsaturation into fatty acids. Catalyzes the dehydration of (3R)-3-hydroxydecanoyl-ACP to E-(2)-decenoyl-ACP and then its isomerization to Z-(3)-decenoyl-ACP. Can catalyze the dehydratase reaction for beta-hydroxyacyl-ACPs with saturated chain lengths up to 16:0, being most active on intermediate chain length. In Rhodopseudomonas palustris (strain BisA53), this protein is 3-hydroxydecanoyl-[acyl-carrier-protein] dehydratase.